We begin with the raw amino-acid sequence, 259 residues long: Tumor necrosis factor receptor superfamily member 10C (259 aa).

A signal peptide spans 1–25 (MARIPKTLKFVVVIVAVLLPVLAYS). 3 TNFR-Cys repeats span residues 29–66 (ARQE…TGAC), 69–109 (CTEG…DTVC), and 110–149 (QCKE…DIQC). The span at 30-45 (RQEEVPQQTVAPQQQR) shows a compositional bias: polar residues. The disordered stretch occupies residues 30–56 (RQEEVPQQTVAPQQQRHSFKGEECPAG). 7 disulfide bridges follow: cysteine 53/cysteine 66, cysteine 69/cysteine 85, cysteine 88/cysteine 101, cysteine 91/cysteine 109, cysteine 111/cysteine 125, cysteine 128/cysteine 141, and cysteine 131/cysteine 149. Residue asparagine 77 is glycosylated (N-linked (GlcNAc...) (high mannose) asparagine). Residues asparagine 140 and asparagine 156 are each glycosylated (N-linked (GlcNAc...) (high mannose) asparagine). The interval 160-224 (ETPAAEETMN…TSPGTPAPAA (65 aa)) is disordered. 5 TAPE repeats span residues 162-176 (PAAE…GTPA), 177-191 (PAAE…GTPA), 192-206 (PAAE…GTPA), 207-221 (PAAE…GTPA), and 222-236 (PAAE…GTPA). Residues 185-217 (TSPGTPAPAAEETMTTSPGTPAPAAEETMTTSP) show a composition bias toward low complexity. Residue alanine 236 is the site of GPI-anchor amidated alanine attachment. Residues 237 to 259 (SSHYLSCTIVGIIVLIVLLIVFV) constitute a propeptide, removed in mature form.

In terms of processing, N-glycosylated and O-glycosylated. Higher expression in normal tissues than in tumor cell lines. Highly expressed in peripheral blood lymphocytes, spleen, skeletal muscle, placenta, lung and heart.

The protein localises to the cell membrane. Functionally, receptor for the cytotoxic ligand TRAIL. Lacks a cytoplasmic death domain and hence is not capable of inducing apoptosis. May protect cells against TRAIL mediated apoptosis by competing with TRAIL-R1 and R2 for binding to the ligand. This chain is Tumor necrosis factor receptor superfamily member 10C (TNFRSF10C), found in Homo sapiens (Human).